The following is a 510-amino-acid chain: ATP synthase subunit alpha (510 aa).

169–176 (GDRQTGKT) is a binding site for ATP.

It belongs to the ATPase alpha/beta chains family. F-type ATPases have 2 components, CF(1) - the catalytic core - and CF(0) - the membrane proton channel. CF(1) has five subunits: alpha(3), beta(3), gamma(1), delta(1), epsilon(1). CF(0) has three main subunits: a(1), b(2) and c(9-12). The alpha and beta chains form an alternating ring which encloses part of the gamma chain. CF(1) is attached to CF(0) by a central stalk formed by the gamma and epsilon chains, while a peripheral stalk is formed by the delta and b chains.

It is found in the cell inner membrane. It catalyses the reaction ATP + H2O + 4 H(+)(in) = ADP + phosphate + 5 H(+)(out). Functionally, produces ATP from ADP in the presence of a proton gradient across the membrane. The alpha chain is a regulatory subunit. The polypeptide is ATP synthase subunit alpha (Nitrobacter hamburgensis (strain DSM 10229 / NCIMB 13809 / X14)).